Here is a 184-residue protein sequence, read N- to C-terminus: Ethylene-responsive transcription factor ERF024 (184 aa).

Positions 1 to 21 (MQGTSKDNGGRHPLYRGVRQR) are disordered. A DNA-binding region (AP2/ERF) is located at residues 14–72 (LYRGVRQRKNSNKWVSEIREPRKPNRIWLGTFSTPEMAAIAYDVAALALKGSQAELNFP).

It belongs to the AP2/ERF transcription factor family. ERF subfamily.

It localises to the nucleus. Functionally, probably acts as a transcriptional activator. Binds to the GCC-box pathogenesis-related promoter element. May be involved in the regulation of gene expression by stress factors and by components of stress signal transduction pathways. The chain is Ethylene-responsive transcription factor ERF024 (ERF024) from Arabidopsis thaliana (Mouse-ear cress).